A 417-amino-acid polypeptide reads, in one-letter code: RH-like protein IA (417 aa).

11 helical membrane passes run Cys-12–Thr-32, Leu-44–Phe-64, Val-77–Phe-97, Ile-125–Val-145, Ile-172–Pro-192, Thr-203–Phe-223, Val-238–Leu-258, Ile-265–Cys-285, Leu-287–Gly-307, Asn-331–Thr-351, and Met-358–Leu-378.

This sequence belongs to the ammonium transporter (TC 2.A.49) family. Rh subfamily.

The protein resides in the membrane. Functionally, may be part of an oligomeric complex which is likely to have a transport or channel function in the erythrocyte membrane. The protein is RH-like protein IA of Pan troglodytes (Chimpanzee).